A 434-amino-acid polypeptide reads, in one-letter code: Glutamyl-tRNA reductase (434 aa).

Substrate-binding positions include 49-52, Ser109, 114-116, and Gln120; these read TCNR and EPQ. Cys50 functions as the Nucleophile in the catalytic mechanism. Position 189-194 (189-194) interacts with NADP(+); the sequence is GAGEMC.

This sequence belongs to the glutamyl-tRNA reductase family. As to quaternary structure, homodimer.

It catalyses the reaction (S)-4-amino-5-oxopentanoate + tRNA(Glu) + NADP(+) = L-glutamyl-tRNA(Glu) + NADPH + H(+). Its pathway is porphyrin-containing compound metabolism; protoporphyrin-IX biosynthesis; 5-aminolevulinate from L-glutamyl-tRNA(Glu): step 1/2. Its function is as follows. Catalyzes the NADPH-dependent reduction of glutamyl-tRNA(Glu) to glutamate 1-semialdehyde (GSA). The sequence is that of Glutamyl-tRNA reductase from Geotalea daltonii (strain DSM 22248 / JCM 15807 / FRC-32) (Geobacter daltonii).